Consider the following 100-residue polypeptide: Large ribosomal subunit protein uL23 (100 aa).

It belongs to the universal ribosomal protein uL23 family. In terms of assembly, part of the 50S ribosomal subunit. Contacts protein L29, and trigger factor when it is bound to the ribosome.

One of the early assembly proteins it binds 23S rRNA. One of the proteins that surrounds the polypeptide exit tunnel on the outside of the ribosome. Forms the main docking site for trigger factor binding to the ribosome. This chain is Large ribosomal subunit protein uL23, found in Aggregatibacter actinomycetemcomitans (Actinobacillus actinomycetemcomitans).